The following is a 178-amino-acid chain: Interleukin-10 (178 aa).

Residues 1-18 (MPRSALLCCLILLAGVAA) form the signal peptide. 2 disulfides stabilise this stretch: Cys30-Cys126 and Cys80-Cys132. Asn134 is a glycosylation site (N-linked (GlcNAc...) asparagine).

This sequence belongs to the IL-10 family. Homodimer. Interacts with IL10RA and IL10RB.

The protein localises to the secreted. Major immune regulatory cytokine that acts on many cells of the immune system where it has profound anti-inflammatory functions, limiting excessive tissue disruption caused by inflammation. Mechanistically, IL10 binds to its heterotetrameric receptor comprising IL10RA and IL10RB leading to JAK1 and STAT2-mediated phosphorylation of STAT3. In turn, STAT3 translocates to the nucleus where it drives expression of anti-inflammatory mediators. Targets antigen-presenting cells (APCs) such as macrophages and monocytes and inhibits their release of pro-inflammatory cytokines including granulocyte-macrophage colony-stimulating factor /GM-CSF, granulocyte colony-stimulating factor/G-CSF, IL-1 alpha, IL-1 beta, IL-6, IL-8 and TNF-alpha. Also interferes with antigen presentation by reducing the expression of MHC-class II and co-stimulatory molecules, thereby inhibiting their ability to induce T cell activation. In addition, controls the inflammatory response of macrophages by reprogramming essential metabolic pathways including mTOR signaling. In Lama glama (Llama), this protein is Interleukin-10 (IL10).